Reading from the N-terminus, the 189-residue chain is NADH-quinone oxidoreductase subunit B (189 aa).

The [4Fe-4S] cluster site is built by C39, C40, C104, and C135.

It belongs to the complex I 20 kDa subunit family. NDH-1 is composed of 14 different subunits. Subunits NuoB, C, D, E, F, and G constitute the peripheral sector of the complex. The cofactor is [4Fe-4S] cluster.

It localises to the cell inner membrane. It catalyses the reaction a quinone + NADH + 5 H(+)(in) = a quinol + NAD(+) + 4 H(+)(out). Functionally, NDH-1 shuttles electrons from NADH, via FMN and iron-sulfur (Fe-S) centers, to quinones in the respiratory chain. The immediate electron acceptor for the enzyme in this species is believed to be a menaquinone. Couples the redox reaction to proton translocation (for every two electrons transferred, four hydrogen ions are translocated across the cytoplasmic membrane), and thus conserves the redox energy in a proton gradient. The sequence is that of NADH-quinone oxidoreductase subunit B from Chlorobium phaeobacteroides (strain DSM 266 / SMG 266 / 2430).